The primary structure comprises 223 residues: Deoxyribose-phosphate aldolase (223 aa).

Residue Asp-91 is the Proton donor/acceptor of the active site. The active-site Schiff-base intermediate with acetaldehyde is the Lys-153. The active-site Proton donor/acceptor is the Lys-182.

This sequence belongs to the DeoC/FbaB aldolase family. DeoC type 1 subfamily.

The protein resides in the cytoplasm. It catalyses the reaction 2-deoxy-D-ribose 5-phosphate = D-glyceraldehyde 3-phosphate + acetaldehyde. The protein operates within carbohydrate degradation; 2-deoxy-D-ribose 1-phosphate degradation; D-glyceraldehyde 3-phosphate and acetaldehyde from 2-deoxy-alpha-D-ribose 1-phosphate: step 2/2. Functionally, catalyzes a reversible aldol reaction between acetaldehyde and D-glyceraldehyde 3-phosphate to generate 2-deoxy-D-ribose 5-phosphate. This Yersinia pseudotuberculosis serotype O:1b (strain IP 31758) protein is Deoxyribose-phosphate aldolase.